The following is a 269-amino-acid chain: NAD kinase (269 aa).

The active-site Proton acceptor is Asp45. NAD(+)-binding positions include 45-46 (DG), 122-123 (NE), Arg149, Asp151, and Ala186.

The protein belongs to the NAD kinase family. A divalent metal cation serves as cofactor.

It localises to the cytoplasm. The catalysed reaction is NAD(+) + ATP = ADP + NADP(+) + H(+). Its function is as follows. Involved in the regulation of the intracellular balance of NAD and NADP, and is a key enzyme in the biosynthesis of NADP. Catalyzes specifically the phosphorylation on 2'-hydroxyl of the adenosine moiety of NAD to yield NADP. The protein is NAD kinase of Staphylococcus carnosus (strain TM300).